Here is a 335-residue protein sequence, read N- to C-terminus: Cytoskeleton protein RodZ (335 aa).

The Cytoplasmic segment spans residues 1–111 (MNTEATHDQN…LGKRRKKRDG (111 aa)). Residues 19 to 71 (LRNAREQLGLSQQAVAERLCLKVSTVRDIEEDKAPADLASTFLRGYIRSYARL) enclose the HTH cro/C1-type domain. Residues 30–49 (QQAVAERLCLKVSTVRDIEE) constitute a DNA-binding region (H-T-H motif). Residues 112–132 (WLMTFTWLVLFVVIGLSGAWW) traverse the membrane as a helical; Signal-anchor for type II membrane protein segment. The Periplasmic segment spans residues 133–335 (WQDHKAQQEE…TLNAEQSPAQ (203 aa)). Over residues 148–164 (DQSSAELNNNQSQSVPL) the composition is skewed to polar residues. The disordered stretch occupies residues 148 to 244 (DQSSAELNNN…PLPTDQAGVT (97 aa)). 2 stretches are compositionally biased toward low complexity: residues 165 to 205 (DTST…DPQQ) and 217 to 239 (DTAA…LPTD).

The protein belongs to the RodZ family.

It localises to the cell inner membrane. Functionally, cytoskeletal protein that is involved in cell-shape control through regulation of the length of the long axis. The protein is Cytoskeleton protein RodZ of Escherichia coli O127:H6 (strain E2348/69 / EPEC).